A 72-amino-acid chain; its full sequence is UPF0352 protein HI_0840 (72 aa).

It belongs to the UPF0352 family.

This chain is UPF0352 protein HI_0840, found in Haemophilus influenzae (strain ATCC 51907 / DSM 11121 / KW20 / Rd).